Here is a 277-residue protein sequence, read N- to C-terminus: NADPH-dependent 7-cyano-7-deazaguanine reductase (277 aa).

86–88 (IES) provides a ligand contact to substrate. 88 to 89 (SK) provides a ligand contact to NADPH. Cysteine 185 (thioimide intermediate) is an active-site residue. Aspartate 192 serves as the catalytic Proton donor. Residue 224-225 (HE) participates in substrate binding. 253-254 (RG) serves as a coordination point for NADPH.

This sequence belongs to the GTP cyclohydrolase I family. QueF type 2 subfamily. In terms of assembly, homodimer.

It localises to the cytoplasm. The catalysed reaction is 7-aminomethyl-7-carbaguanine + 2 NADP(+) = 7-cyano-7-deazaguanine + 2 NADPH + 3 H(+). Its pathway is tRNA modification; tRNA-queuosine biosynthesis. Functionally, catalyzes the NADPH-dependent reduction of 7-cyano-7-deazaguanine (preQ0) to 7-aminomethyl-7-deazaguanine (preQ1). The sequence is that of NADPH-dependent 7-cyano-7-deazaguanine reductase from Hydrogenovibrio crunogenus (strain DSM 25203 / XCL-2) (Thiomicrospira crunogena).